A 395-amino-acid polypeptide reads, in one-letter code: WW domain-containing transcription regulator protein 1 (395 aa).

K46 participates in a covalent cross-link: Glycyl lysine isopeptide (Lys-Gly) (interchain with G-Cter in ubiquitin). Residues 52–116 (FFKEPDSGSH…AQQHAHLRQQ (65 aa)) are disordered. Residues 61 to 70 (HSRQSSTDSS) are compositionally biased toward polar residues. The residue at position 62 (S62) is a Phosphoserine. S89 bears the Phosphoserine; by LATS2 mark. A WW domain is found at 124–157 (LPLPPGWEMTFTATGQRYFLNHIEKITTWQDPRK). The required for interaction with PALS1 stretch occupies residues 221 to 395 (PNALTTQQQQ…NKSEPFLTWL (175 aa)). Residues 224–258 (LTTQQQQQQKLRLQRIQMERERIRMRQEELMRQEA) adopt a coiled-coil conformation. Residues 277-293 (PAMSTDMRSVTNSSSDP) show a composition bias toward polar residues. The segment at 277–308 (PAMSTDMRSVTNSSSDPFLNGGPYHSREQSTD) is disordered. S290 is modified (phosphoserine). Position 306 is a phosphoserine; by LATS2 (S306). The PDZ-binding signature appears at 389-395 (EPFLTWL).

As to quaternary structure, binds to SLC9A3R2 via the PDZ motif at the plasma membrane. Binds to YWHAZ in vivo and in vitro through the phosphoserine-binding motif RSHSSP. Interacts (via coiled-coil domain) with SMAD2 (via MH1 domain), SMAD3 and SMAD4. Interacts with MED15. Interacts with PAX8 and NKX2-1. Interacts with TEAD1, TEAD2, TEAD3 and TEAD4. Interacts (via WW domain) with PALS1. Interacts with LATS1. Interacts with YAP1 (when phosphorylated at 'Ser-112'). Interacts (via WW domain) with PRRG4 (via cytoplasmic domain). Interacts (via WW domain) with AMOTL2 (via PPXY motif); the interaction promotes WWTR1/TAZ localization to the cytoplasm and tight junctions, thereby inhibiting its transcriptional coactivator properties. Interacts (via WW domain) with AMOT; the interaction facilitates translocation of WWTR1/TAZ to the cytoplasm. Post-translationally, phosphorylated by LATS2 and STK3/MST2. Phosphorylation by LATS2 results in creation of 14-3-3 binding sites, retention in the cytoplasm, and functional inactivation. Phosphorylation results in the inhibition of transcriptional coactivation through YWHAZ-mediated nuclear export. Ubiquitinated at Lys-46; leading to proteasomal degradation. Deubiquitinated and stabilized by UCHL1 at Lys-46; leading to inhibition of osteoclastogenesis. In terms of tissue distribution, highly expressed in kidney, heart, placenta and lung.

The protein resides in the nucleus. Its subcellular location is the cytoplasm. It localises to the cell membrane. It is found in the cell junction. The protein localises to the tight junction. Functionally, transcriptional coactivator which acts as a downstream regulatory target in the Hippo signaling pathway that plays a pivotal role in organ size control and tumor suppression by restricting proliferation and promoting apoptosis. The core of this pathway is composed of a kinase cascade wherein STK3/MST2 and STK4/MST1, in complex with its regulatory protein SAV1, phosphorylates and activates LATS1/2 in complex with its regulatory protein MOB1, which in turn phosphorylates and inactivates YAP1 oncoprotein and WWTR1/TAZ. WWTR1 enhances PAX8 and NKX2-1/TTF1-dependent gene activation. In conjunction with YAP1, involved in the regulation of TGFB1-dependent SMAD2 and SMAD3 nuclear accumulation. Plays a key role in coupling SMADs to the transcriptional machinery such as the mediator complex. Regulates embryonic stem-cell self-renewal, promotes cell proliferation and epithelial-mesenchymal transition. The protein is WW domain-containing transcription regulator protein 1 of Mus musculus (Mouse).